A 223-amino-acid polypeptide reads, in one-letter code: ATP phosphoribosyltransferase (223 aa).

This sequence belongs to the ATP phosphoribosyltransferase family. Short subfamily. As to quaternary structure, heteromultimer composed of HisG and HisZ subunits.

It is found in the cytoplasm. The enzyme catalyses 1-(5-phospho-beta-D-ribosyl)-ATP + diphosphate = 5-phospho-alpha-D-ribose 1-diphosphate + ATP. The protein operates within amino-acid biosynthesis; L-histidine biosynthesis; L-histidine from 5-phospho-alpha-D-ribose 1-diphosphate: step 1/9. Its function is as follows. Catalyzes the condensation of ATP and 5-phosphoribose 1-diphosphate to form N'-(5'-phosphoribosyl)-ATP (PR-ATP). Has a crucial role in the pathway because the rate of histidine biosynthesis seems to be controlled primarily by regulation of HisG enzymatic activity. This Sphingopyxis alaskensis (strain DSM 13593 / LMG 18877 / RB2256) (Sphingomonas alaskensis) protein is ATP phosphoribosyltransferase.